Consider the following 309-residue polypeptide: Homoserine kinase (309 aa).

91 to 101 contributes to the ATP binding site; that stretch reads PIGSGLGSSAC.

Belongs to the GHMP kinase family. Homoserine kinase subfamily.

The protein localises to the cytoplasm. It carries out the reaction L-homoserine + ATP = O-phospho-L-homoserine + ADP + H(+). It participates in amino-acid biosynthesis; L-threonine biosynthesis; L-threonine from L-aspartate: step 4/5. Catalyzes the ATP-dependent phosphorylation of L-homoserine to L-homoserine phosphate. The chain is Homoserine kinase from Edwardsiella ictaluri (strain 93-146).